Here is a 171-residue protein sequence, read N- to C-terminus: MAEKRNIFLVGPMGAGKSTIGRHLAQMLHLDFHDSDHEIEQRTGADIAWVFDVEGEEGFRRREAQVIGDLSERQGIVLATGGGSVQSKDIRNYLSARGIVVYLETTIDKQVARTQRDKRRPLLQVDDPREVLESLAEIRNPLYEEIADVIVKTDEQSAKIVANQIIEQLGF.

14–19 (GAGKST) lines the ATP pocket. S18 is a binding site for Mg(2+). Substrate is bound by residues D36, R60, and G82. An ATP-binding site is contributed by R120. R139 contributes to the substrate binding site. Q156 lines the ATP pocket.

It belongs to the shikimate kinase family. Monomer. It depends on Mg(2+) as a cofactor.

The protein resides in the cytoplasm. The catalysed reaction is shikimate + ATP = 3-phosphoshikimate + ADP + H(+). The protein operates within metabolic intermediate biosynthesis; chorismate biosynthesis; chorismate from D-erythrose 4-phosphate and phosphoenolpyruvate: step 5/7. In terms of biological role, catalyzes the specific phosphorylation of the 3-hydroxyl group of shikimic acid using ATP as a cosubstrate. This is Shikimate kinase from Shewanella frigidimarina (strain NCIMB 400).